A 482-amino-acid chain; its full sequence is Glutamate synthase [NADPH] small chain (482 aa).

The 34-residue stretch at 39 to 72 (ERANEQANRCSQCGVPFCQVHCPVSNNIPDWLKL) folds into the 4Fe-4S ferredoxin-type domain. [4Fe-4S] cluster-binding residues include Cys95, Cys99, Cys105, and Cys109.

Aggregate of 4 catalytic active heterodimers, consisting of a large and a small subunit. Requires [4Fe-4S] cluster as cofactor.

It carries out the reaction 2 L-glutamate + NADP(+) = L-glutamine + 2-oxoglutarate + NADPH + H(+). It functions in the pathway amino-acid biosynthesis; L-glutamate biosynthesis via GLT pathway; L-glutamate from 2-oxoglutarate and L-glutamine (NADP(+) route): step 1/1. Its pathway is energy metabolism; nitrogen metabolism. This chain is Glutamate synthase [NADPH] small chain (gltD), found in Azospirillum brasilense.